A 257-amino-acid chain; its full sequence is Hydroxyacylglutathione hydrolase (257 aa).

Zn(2+) is bound by residues histidine 54, histidine 56, aspartate 58, histidine 59, histidine 113, aspartate 137, and histidine 175.

It belongs to the metallo-beta-lactamase superfamily. Glyoxalase II family. Monomer. Zn(2+) serves as cofactor.

The catalysed reaction is an S-(2-hydroxyacyl)glutathione + H2O = a 2-hydroxy carboxylate + glutathione + H(+). The protein operates within secondary metabolite metabolism; methylglyoxal degradation; (R)-lactate from methylglyoxal: step 2/2. Functionally, thiolesterase that catalyzes the hydrolysis of S-D-lactoyl-glutathione to form glutathione and D-lactic acid. The chain is Hydroxyacylglutathione hydrolase from Trichodesmium erythraeum (strain IMS101).